We begin with the raw amino-acid sequence, 455 residues long: UDP-N-acetylmuramoylalanine--D-glutamate ligase (455 aa).

Residue 118–124 coordinates ATP; the sequence is GTNGKST.

Belongs to the MurCDEF family.

It is found in the cytoplasm. The enzyme catalyses UDP-N-acetyl-alpha-D-muramoyl-L-alanine + D-glutamate + ATP = UDP-N-acetyl-alpha-D-muramoyl-L-alanyl-D-glutamate + ADP + phosphate + H(+). Its pathway is cell wall biogenesis; peptidoglycan biosynthesis. In terms of biological role, cell wall formation. Catalyzes the addition of glutamate to the nucleotide precursor UDP-N-acetylmuramoyl-L-alanine (UMA). This is UDP-N-acetylmuramoylalanine--D-glutamate ligase from Myxococcus xanthus (strain DK1622).